A 115-amino-acid chain; its full sequence is Large ribosomal subunit protein uL22 (115 aa).

It belongs to the universal ribosomal protein uL22 family. In terms of assembly, part of the 50S ribosomal subunit.

Functionally, this protein binds specifically to 23S rRNA; its binding is stimulated by other ribosomal proteins, e.g. L4, L17, and L20. It is important during the early stages of 50S assembly. It makes multiple contacts with different domains of the 23S rRNA in the assembled 50S subunit and ribosome. The globular domain of the protein is located near the polypeptide exit tunnel on the outside of the subunit, while an extended beta-hairpin is found that lines the wall of the exit tunnel in the center of the 70S ribosome. The chain is Large ribosomal subunit protein uL22 (rplV) from Wolbachia pipientis wMel.